Here is a 3961-residue protein sequence, read N- to C-terminus: Replicase polyprotein 1ab (3961 aa).

Residues 8–28 form a C4-type; atypical zinc finger; the sequence is CTCTPNARVFVAEGQVYCTRC. In terms of domain architecture, Peptidase C31 spans 69 to 180; sequence ECSPAGACWL…EDFCPFECAM (112 aa). The tract at residues 69 to 182 is PCP1-alpha; sequence ECSPAGACWL…FCPFECAMAT (114 aa). Catalysis depends on for Nsp1-alpha papain-like cysteine proteinase activity residues C76 and H146. The interval 199 to 200 is important for host EIF2AK2 inhibition; sequence IS. The PCP1-beta stretch occupies residues 263–382; that stretch reads DTVPEGNCWW…IFRFGSHKWY (120 aa). Residues 263 to 383 enclose the Peptidase C32 domain; the sequence is DTVPEGNCWW…FRFGSHKWYG (121 aa). Residues C270 and H339 each act as for Nsp1-beta papain-like cysteine proteinase activity in the active site. Residues 426-513 are OTU-like; sequence LKHYSPPAEG…GEHWTVTVTP (88 aa). Residues 428–535 form the Peptidase C33 domain; sequence HYSPPAEGNC…QGCCEHKGGL (108 aa). Active-site for Nsp2 cysteine proteinase activity residues include C437 and H506. 3 disordered regions span residues 809 to 862, 898 to 979, and 1153 to 1213; these read RWTP…NSWE, ATPL…GVLG, and NQEP…GGGP. The span at 810 to 819 shows a compositional bias: pro residues; it reads WTPPPPPPKV. Helical transmembrane passes span 1266 to 1286, 1296 to 1316, 1345 to 1365, 1368 to 1388, 1583 to 1603, 1650 to 1670, 1685 to 1705, and 1719 to 1739; these read LCLFLCYSYPAFGIAPLLGVF, GVFGCWLAFAVGLFKPVSDPV, SLVVGPVGLGLAILGRLLGGA, IWHFLLRLGIVADCILAGAYV, LMAALHVACSMALHMLTGIYV, ALVAGFGIQEIALVVLIFVSI, CILLAIASYVWVPLTWLLCVF, and ILWLVFFLISVNMPSGILAMV. Positions 1266–1388 are HD1; it reads LCLFLCYSYP…ADCILAGAYV (123 aa). The tract at residues 1583–1745 is HD2; it reads LMAALHVACS…LAMVLLVSLW (163 aa). Positions 1810-2013 constitute a Peptidase S32 domain; that stretch reads GAFRTRKPSL…ALLAAKPELE (204 aa). Residues H1848, D1873, and S1927 each act as charge relay system; for 3C-like serine proteinase activity in the active site. 5 helical membrane passes run 2012–2032, 2060–2080, 2092–2112, 2137–2157, and 2164–2184; these read LEGGLSTVQLLCVFFLLWRMM, FSFGMFVLSWLTPWSAQILMI, WSLAFFSLGAVTGFVADLAAT, SPVPVITCGVVHLLAIILYLF, and QILVGDGVFSAAFFLRYFAEG. Residues 2036 to 2157 are HD3; that stretch reads WTPLVAVSFF…HLLAIILYLF (122 aa). Residues 2329–2358 are disordered; the sequence is PTPTPPPAPVPIPLPPKVLENGPNAWGDED. Pro residues predominate over residues 2330–2344; the sequence is TPTPPPAPVPIPLPP. Residues 2488–2651 enclose the NiRAN domain; it reads IIDKLQGLTK…LPYKLYPVRG (164 aa). One can recognise a RdRp catalytic domain in the interval 2890-3024; it reads GRCLEADLAS…YAESPTMPNY (135 aa). Positions 3145 to 3208 constitute an AV ZBD domain; that stretch reads GKKSRVCGYC…SPVGKGTSPL (64 aa). C3151, C3154, C3164, C3169, H3172, H3174, H3176, H3178, C3185, H3187, C3194, and C3197 together coordinate Zn(2+). Positions 3265 to 3417 constitute a (+)RNA virus helicase ATP-binding domain; the sequence is ASTALLPTCK…VFDIMPQTQL (153 aa). 3298–3305 is a binding site for ATP; that stretch reads GKTYWLLQ. A (+)RNA virus helicase C-terminal domain is found at 3418-3546; sequence KTIWRFGQNI…AVHRDGQLIV (129 aa). The AV-Nsp11N/CoV-Nsp15M domain occupies 3585-3681; it reads EGSSSPLPKV…LTKFVKGEAQ (97 aa). The region spanning 3683–3805 is the NendoU domain; sequence LPETVFSTGR…MVWRDKTAYF (123 aa). Active-site residues include H3714, H3729, and K3758.

The protein belongs to the arteriviridae polyprotein family. As to quaternary structure, nsp1-alpha papain-like: Interacts with host RNF31. In terms of assembly, interacts with host EIF2AK2; this interaction occurs in host stress granules and leads to EIF2AK2 inhibition. Interacts with host G3BP1; this interaction probably plays a role in Nsp1-beta-mediated inhibition of host EIF2AK2. Interacts with host DDX18; this interaction redistributes host DDX18 to the cytoplasm. As to quaternary structure, interacts with host IFITM1. In terms of assembly, interacts with host DDX5. Interacts with host OTULIN. As to quaternary structure, interacts with host LGALS3. Specific enzymatic cleavages in vivo by its own proteases yield mature proteins. Nsp1 is autocleaved into two subunits, Nsp1-alpha and Nsp1-beta. There are two alternative pathways for processing. Either nsp4-5 is cleaved, which represents the major pathway or the nsp5-6 and nsp6-7 are processed, which represents the minor pathway. The major pathway occurs when nsp2 acts as a cofactor for nsp4.

The protein resides in the host nucleus. It localises to the host cytoplasm. It is found in the host membrane. Its subcellular location is the host endoplasmic reticulum. The protein localises to the host perinuclear region. The catalysed reaction is RNA(n) + a ribonucleoside 5'-triphosphate = RNA(n+1) + diphosphate. It carries out the reaction ATP + H2O = ADP + phosphate + H(+). It catalyses the reaction Thiol-dependent hydrolysis of ester, thioester, amide, peptide and isopeptide bonds formed by the C-terminal Gly of ubiquitin (a 76-residue protein attached to proteins as an intracellular targeting signal).. The enzyme catalyses uridylyl-uridylyl-ribonucleotide-RNA = a 3'-end uridylyl-2',3'-cyclophospho-uridine-RNA + a 5'-end dephospho-ribonucleoside-RNA. In terms of biological role, contains the activities necessary for the transcription of negative stranded RNA, leader RNA, subgenomic mRNAs and progeny virion RNA as well as proteinases responsible for the cleavage of the polyprotein into functional products. Inhibits host IFN-beta production. Plays a role in the degradation of the host transcriptional activator CREBBP protein. The degradation of host CREBBP which is a key component of the IFN enhanceosome is likely responsible for the inhibition of interferon mediated by Nsp1-alpha. Also participates in the inhibition of host NF-kappa-B activation by counteracting LUBAC-dependent induction of NF-kappa-B. Reduces host NEMO ubiquitination by blocking the interaction between the two LUBAC complex components RNF31 and SHARPIN. Its function is as follows. Plays a role in blocking host mRNA nuclear export to the cytoplasm and subversion of host protein synthesis. Additionally, inhibits the interferon-activated JAK/STAT signal transduction by mediating the ubiquitination and subsequent proteasomal degradation of host KPNA1. Repurposes the host antiviral stress granules into a proviral platform to counteract the EIF2AK2/PKR restriction, thereby regulating the host inflammatory response. Functionally, multifunctional protein that acts as a viral protease and as a viral antagonist of host immune response. Cleaves the nsp2/nsp3 site in the viral polyprotein. Displays deubiquitinating activity that cleaves both ubiquitinated and ISGylated products and therefore inhibits ubiquitin and ISG15-dependent host innate immunity. Also deubiquinates host NFKBIA, thereby interfering with NFKBIA degradation and impairing subsequent NF-kappa-B activation. In terms of biological role, plays a role in the inhibition of the immune response by interacting with host IFITM1. This interaction leads to the proteasomal degradation of the IFN-induced antiviral protein IFITM1. Cleaves the majority of cleavage sites present in the C-terminus of the polyprotein. Triggers host apoptosis through caspase-3, -8, and -9 activations. Subverts host innate immune responses through its protease activity. Targets the NF-kappa-B essential modulator NEMO and mediates its cleavage. Blocks host interferon beta induction and downstream signaling by cleaving mitochondrial MAVS, dislodging it from the mitochondria. Impairs host defense by cleaving host mRNA-decapping enzyme DCP1A to attenuate its antiviral activity. Its function is as follows. Plays a role in the initial induction of autophagosomes from host endoplasmic reticulum. Functionally, plays a role in the inhibition of host STAT3 signaling pathway by inducing the degradation of STAT3. In terms of biological role, responsible for replication and transcription of the viral RNA genome. Displays RNA and DNA duplex-unwinding activities with 5' to 3' polarity. Its function is as follows. Plays a role in viral transcription/replication and prevents the simultaneous activation of host cell dsRNA sensors, such as MDA5/IFIH1, OAS, PKR and NLRP3 inflammasome. Acts by degrading the 5'-polyuridines generated during replication of the poly(A) region of viral genomic and subgenomic RNAs. Catalyzes a two-step reaction in which a 2'3'-cyclic phosphate (2'3'-cP) is first generated by 2'-O transesterification, which is then hydrolyzed to a 3'-phosphate (3'-P). If not degraded, poly(U) RNA would hybridize with poly(A) RNA tails and activate host dsRNA sensors. Also plays a role in the inhibition of host type I interferon production by recruiting host OTULIN to promote removal of linear ubiquitination targeting host NEMO. This chain is Replicase polyprotein 1ab (rep), found in Porcine reproductive and respiratory syndrome virus (strain 16244B) (PRRSV).